A 212-amino-acid polypeptide reads, in one-letter code: uncharacterized protein (212 aa).

Positions 53, 74, and 96 each coordinate S-adenosyl-L-methionine.

It belongs to the methyltransferase superfamily. YrrT family.

In terms of biological role, could be a S-adenosyl-L-methionine-dependent methyltransferase. This is an uncharacterized protein from Anoxybacillus flavithermus (strain DSM 21510 / WK1).